We begin with the raw amino-acid sequence, 118 residues long: T cell receptor gamma variable 4 (118 aa).

The N-terminal stretch at 1-17 (MQWALAVLLAFLSPASQ) is a signal peptide. Residues 18–118 (KSSNLEGRTK…GVYYCATWDG (101 aa)) form the Ig-like domain. Cys-41 and Cys-113 are oxidised to a cystine. An N-linked (GlcNAc...) asparagine glycan is attached at Asn-106.

Gamma-delta TR is a heterodimer composed of a gamma and delta chain; disulfide-linked. The gamma-delta TR is associated with the transmembrane signaling CD3 coreceptor proteins following the stoichiometry: a single gamma-delta TR heterodimer associates with one CD3D-CD3E heterodimer, one CD3G-CD3E heterodimer and one CD247 homodimer forming a stable octameric structure. Upon activation, gamma-delta TR complex associates with FCER1G to initiate intracellular signaling.

It is found in the cell membrane. In terms of biological role, v region of the variable domain of T cell receptor (TR) gamma chain that participates in the antigen recognition. Gamma-delta TRs recognize a variety of self and foreign non-peptide antigens frequently expressed at the epithelial boundaries between the host and external environment, including endogenous lipids presented by MH-like protein CD1D and phosphoantigens presented by butyrophilin-like molecule BTN3A1. Upon antigen recognition induces rapid, innate-like immune responses involved in pathogen clearance and tissue repair. Binding of gamma-delta TR complex to antigen triggers phosphorylation of immunoreceptor tyrosine-based activation motifs (ITAMs) in the CD3 chains by the LCK and FYN kinases, allowing the recruitment, phosphorylation, and activation of ZAP70 that facilitates phosphorylation of the scaffolding proteins LCP2 and LAT. This lead to the formation of a supramolecular signalosome that recruits the phospholipase PLCG1, resulting in calcium mobilization and ERK activation, ultimately leading to T cell expansion and differentiation into effector cells. Gamma-delta TRs are produced through somatic rearrangement of a limited repertoire of variable (V), diversity (D), and joining (J) genes. The potential diversity of gamma-delta TRs is conferred by the unique ability to rearrange (D) genes in tandem and to utilize all three reading frames. The combinatorial diversity is considerably increased by the sequence exonuclease trimming and random nucleotide (N) region additions which occur during the V-(D)-J rearrangements. The sequence is that of T cell receptor gamma variable 4 from Homo sapiens (Human).